We begin with the raw amino-acid sequence, 472 residues long: ESX-3 secretion system protein EccD3 (472 aa).

11 helical membrane passes run 121 to 141 (WGIAHIQRGALAAVIAVALLA), 155 to 175 (LAGLLAVAGIAVASALAGLLI), 183 to 203 (GIALSIAALVPIGAALALAVP), 211 to 231 (VLLGAAGVAAWSLIALMIPSA), 236 to 256 (VVAFFTAAAVVGASVALAAGA), 258 to 278 (LLWQLPLLSIGCGLIVAALLV), 327 to 347 (QSGFIAAAVLLSVLGSVAIAV), 349 to 369 (PEALSVVGWYLVAATAAAATL), 381 to 401 (AWLLAQPYLVAGVLLVFYTAT), 405 to 425 (VAAFGAVLVLAVLMLAWVVVA), and 450 to 470 (GLDVSLIPVMAYLVGLFAWVL).

The protein belongs to the EccD/Snm4 family. As to quaternary structure, part of the ESX-3 / type VII secretion system (T7SS), which is composed of cytosolic and membrane components. The ESX-3 membrane complex is composed of EccB3, EccC3, EccD3 and EccE3.

Its subcellular location is the cell inner membrane. Its function is as follows. Part of the ESX-3 specialized secretion system, which is important for iron and zinc uptake or homeostasis. In Mycobacterium tuberculosis (strain CDC 1551 / Oshkosh), this protein is ESX-3 secretion system protein EccD3.